The chain runs to 469 residues: Cysteine protease ATG4 (469 aa).

The tract at residues Lys48–Ser99 is disordered. The segment covering Ala66–Asp75 has biased composition (basic and acidic residues). Pro residues predominate over residues Pro79–Pro90. Catalysis depends on Cys172, which acts as the Nucleophile. Catalysis depends on residues Asp362 and His364. The interval Gly443–Ala469 is disordered. Acidic residues predominate over residues Ile452–Thr463.

It belongs to the peptidase C54 family. In terms of assembly, interacts with ATG8.

It is found in the cytoplasm. It localises to the nucleus. Its subcellular location is the preautophagosomal structure. The catalysed reaction is [protein]-C-terminal L-amino acid-glycyl-phosphatidylethanolamide + H2O = [protein]-C-terminal L-amino acid-glycine + a 1,2-diacyl-sn-glycero-3-phosphoethanolamine. Cysteine protease that plays a key role in cytoplasm to vacuole transport (Cvt) and autophagy by mediating both proteolytic activation and delipidation of ATG8. Required for selective autophagic degradation of the nucleus (nucleophagy) as well as for mitophagy which contributes to regulate mitochondrial quantity and quality by eliminating the mitochondria to a basal level to fulfill cellular energy requirements and preventing excess ROS production. The protease activity is required for proteolytic activation of ATG8: cleaves the C-terminal amino acid of ATG8 to reveal a C-terminal glycine. ATG8 ubiquitin-like activity requires the exposure of the glycine at the C-terminus for its conjugation to phosphatidylethanolamine (PE) and its insertion to membranes, which is necessary for autophagy. The ATG8-PE conjugate mediates tethering between adjacent membranes and stimulates membrane hemifusion, leading to expansion of the autophagosomal membrane during autophagy. In addition to the protease activity, also catalyzes deconjugation of PE-conjugated forms of ATG8 during macroautophagy: ATG8 delipidation is required to release the protein from membranes, which facilitates multiple events during macroautophagy, and especially for efficient autophagosome biogenesis, the assembly of ATG9-containing tubulovesicular clusters into phagophores/autophagosomes, and for the disassembly of PAS-associated ATG components. ATG8 delipidation by ATG4 also recycles ATG8-PE generated on inappropriate membranes to maintain a reservoir of unlipidated ATG8 that is required for autophagosome formation at the PAS. Autophagy is required for proper vegetative growth, asexual/sexual reproduction, and full virulence. Autophagy is particularly involved in the biosynthesis of deoxynivalenol (DON), an important virulence determinant. In Gibberella zeae (strain ATCC MYA-4620 / CBS 123657 / FGSC 9075 / NRRL 31084 / PH-1) (Wheat head blight fungus), this protein is Cysteine protease ATG4.